A 992-amino-acid chain; its full sequence is Probable RNA-dependent RNA polymerase 3 (992 aa).

The segment at 88-113 is disordered; the sequence is PRLSPGESPVQSPRTPAKKSCRASQD.

It belongs to the RdRP family.

It carries out the reaction RNA(n) + a ribonucleoside 5'-triphosphate = RNA(n+1) + diphosphate. Functionally, probably involved in the RNA silencing pathway and required for the generation of small interfering RNAs (siRNAs). This is Probable RNA-dependent RNA polymerase 3 (RDR3) from Arabidopsis thaliana (Mouse-ear cress).